The primary structure comprises 181 residues: Trans-acting factor D (181 aa).

In terms of biological role, plays a role in 2-micron plasmid partitioning. Antagonizes transcriptional repression of recombinase FLP by REP1-REP2. Regulates both stability and copy number of the plasmid by blocking the formation of the REP1-REP2 repressor complex. This is Trans-acting factor D from Saccharomyces cerevisiae (strain ATCC 204508 / S288c) (Baker's yeast).